Consider the following 1417-residue polypeptide: DNA-directed RNA polymerase subunit beta' (1417 aa).

Zn(2+)-binding residues include C68, C70, C83, and C86. Mg(2+) contacts are provided by D458, D460, and D462. The Zn(2+) site is built by C811, C884, C891, and C894.

Belongs to the RNA polymerase beta' chain family. The RNAP catalytic core consists of 2 alpha, 1 beta, 1 beta' and 1 omega subunit. When a sigma factor is associated with the core the holoenzyme is formed, which can initiate transcription. Mg(2+) is required as a cofactor. Requires Zn(2+) as cofactor.

The catalysed reaction is RNA(n) + a ribonucleoside 5'-triphosphate = RNA(n+1) + diphosphate. Its function is as follows. DNA-dependent RNA polymerase catalyzes the transcription of DNA into RNA using the four ribonucleoside triphosphates as substrates. The protein is DNA-directed RNA polymerase subunit beta' of Francisella tularensis subsp. tularensis (strain FSC 198).